The chain runs to 284 residues: Release factor glutamine methyltransferase (284 aa).

S-adenosyl-L-methionine is bound by residues 121–125 (GTGTG), Asp-144, Trp-172, and Asn-188. Substrate is bound at residue 188 to 191 (NPPY).

It belongs to the protein N5-glutamine methyltransferase family. PrmC subfamily.

The enzyme catalyses L-glutaminyl-[peptide chain release factor] + S-adenosyl-L-methionine = N(5)-methyl-L-glutaminyl-[peptide chain release factor] + S-adenosyl-L-homocysteine + H(+). In terms of biological role, methylates the class 1 translation termination release factors RF1/PrfA and RF2/PrfB on the glutamine residue of the universally conserved GGQ motif. The chain is Release factor glutamine methyltransferase from Aliivibrio fischeri (strain ATCC 700601 / ES114) (Vibrio fischeri).